Here is a 207-residue protein sequence, read N- to C-terminus: Basic helix-loop-helix transcription factor scleraxis (207 aa).

Disordered regions lie at residues 1–91 and 151–183; these read MSFA…RDRT and AFFH…QPKQ. Positions 73-91 are enriched in basic and acidic residues; that stretch reads PGREPRQRHTANARERDRT. A bHLH domain is found at 78 to 130; it reads RQRHTANARERDRTNSVNTAFTALRTLIPTEPADRKLSKIETLRLASSYISHL. Pro residues predominate over residues 161 to 171; that stretch reads PLPPPPPPPPL.

Efficient DNA binding requires dimerization with another bHLH protein. Dimerizes and binds the E-box consensus sequence with E12. In terms of tissue distribution, expressed in mesenchymal precursors of cartilage and in connective tissue. Highly expressed in tendons in the limb, tongue and diaphragm and in cartilage of the bronchi.

Its subcellular location is the nucleus. In terms of biological role, plays an early essential role in mesoderm formation, as well as a later role in formation of somite-derived chondrogenic lineages. This is Basic helix-loop-helix transcription factor scleraxis (Scx) from Mus musculus (Mouse).